The sequence spans 285 residues: Ribonuclease Z (285 aa).

His-61, His-63, Asp-65, His-66, His-152, Asp-175, and His-239 together coordinate Zn(2+). The Proton acceptor role is filled by Asp-65.

Belongs to the RNase Z family. In terms of assembly, homodimer. The cofactor is Zn(2+).

The catalysed reaction is Endonucleolytic cleavage of RNA, removing extra 3' nucleotides from tRNA precursor, generating 3' termini of tRNAs. A 3'-hydroxy group is left at the tRNA terminus and a 5'-phosphoryl group is left at the trailer molecule.. Functionally, zinc phosphodiesterase, which displays some tRNA 3'-processing endonuclease activity. Probably involved in tRNA maturation, by removing a 3'-trailer from precursor tRNA. The sequence is that of Ribonuclease Z from Mycobacterium sp. (strain JLS).